The chain runs to 87 residues: Small ribosomal subunit protein eS21B (87 aa).

M1 carries the post-translational modification N-acetylmethionine.

The protein belongs to the eukaryotic ribosomal protein eS21 family. Component of the small ribosomal subunit (SSU). Mature yeast ribosomes consist of a small (40S) and a large (60S) subunit. The 40S small subunit contains 1 molecule of ribosomal RNA (18S rRNA) and 33 different proteins (encoded by 57 genes). The large 60S subunit contains 3 rRNA molecules (25S, 5.8S and 5S rRNA) and 46 different proteins (encoded by 81 genes). In terms of processing, N-terminally acetylated by acetyltransferase NatB.

It localises to the cytoplasm. In terms of biological role, component of the ribosome, a large ribonucleoprotein complex responsible for the synthesis of proteins in the cell. The small ribosomal subunit (SSU) binds messenger RNAs (mRNAs) and translates the encoded message by selecting cognate aminoacyl-transfer RNA (tRNA) molecules. The large subunit (LSU) contains the ribosomal catalytic site termed the peptidyl transferase center (PTC), which catalyzes the formation of peptide bonds, thereby polymerizing the amino acids delivered by tRNAs into a polypeptide chain. The nascent polypeptides leave the ribosome through a tunnel in the LSU and interact with protein factors that function in enzymatic processing, targeting, and the membrane insertion of nascent chains at the exit of the ribosomal tunnel. eS21 is required for the processing of the 20S rRNA-precursor to mature 18S rRNA in a late step of the maturation of 40S ribosomal subunits. Has a physiological role leading to 18S rRNA stability. This is Small ribosomal subunit protein eS21B from Saccharomyces cerevisiae (strain ATCC 204508 / S288c) (Baker's yeast).